Consider the following 229-residue polypeptide: Acetylcholine-binding protein (229 aa).

The N-terminal stretch at 1–19 (MRRNIFCLACLWIVQACLS) is a signal peptide. N-linked (GlcNAc...) asparagine glycosylation is present at asparagine 85. The Ig-like domain maps to 114–217 (PEVLTPQLAR…PEAYEDVEVS (104 aa)). Residues cysteine 142 and cysteine 155 are joined by a disulfide bond.

As to quaternary structure, homopentamer. Post-translationally, N-glycosylated. Expressed by glial cells.

It localises to the synaptic cleft. Its function is as follows. Binds to acetylcholine. Modulates neuronal synaptic transmission. This chain is Acetylcholine-binding protein, found in Lymnaea stagnalis (Great pond snail).